The following is a 206-amino-acid chain: Small ribosomal subunit protein uS4 (206 aa).

One can recognise an S4 RNA-binding domain in the interval 96-156; it reads GRLDNVVYRM…EKAKKQSRVK (61 aa).

The protein belongs to the universal ribosomal protein uS4 family. In terms of assembly, part of the 30S ribosomal subunit. Contacts protein S5. The interaction surface between S4 and S5 is involved in control of translational fidelity.

In terms of biological role, one of the primary rRNA binding proteins, it binds directly to 16S rRNA where it nucleates assembly of the body of the 30S subunit. With S5 and S12 plays an important role in translational accuracy. The protein is Small ribosomal subunit protein uS4 of Serratia proteamaculans (strain 568).